We begin with the raw amino-acid sequence, 512 residues long: uncharacterized protein (512 aa).

This is an uncharacterized protein from Methanocaldococcus jannaschii (strain ATCC 43067 / DSM 2661 / JAL-1 / JCM 10045 / NBRC 100440) (Methanococcus jannaschii).